Reading from the N-terminus, the 414-residue chain is Tyrosine--tRNA ligase (414 aa).

An L-tyrosine-binding site is contributed by Tyr-38. Residues 43–52 carry the 'HIGH' region motif; the sequence is PTAISLHLGN. L-tyrosine-binding residues include Tyr-165 and Gln-169. Residues 227–231 carry the 'KMSKS' region motif; that stretch reads KIGKS. Lys-230 contributes to the ATP binding site. Residues 349–413 form the S4 RNA-binding domain; that stretch reads DDLFLTLVDS…KGKKQYWVIY (65 aa).

Belongs to the class-I aminoacyl-tRNA synthetase family. TyrS type 1 subfamily. Homodimer.

It localises to the cytoplasm. The catalysed reaction is tRNA(Tyr) + L-tyrosine + ATP = L-tyrosyl-tRNA(Tyr) + AMP + diphosphate + H(+). In terms of biological role, catalyzes the attachment of tyrosine to tRNA(Tyr) in a two-step reaction: tyrosine is first activated by ATP to form Tyr-AMP and then transferred to the acceptor end of tRNA(Tyr). This Mycoplasmopsis pulmonis (strain UAB CTIP) (Mycoplasma pulmonis) protein is Tyrosine--tRNA ligase.